The chain runs to 338 residues: Phenylalanine--tRNA ligase alpha subunit (338 aa).

Position 252 (E252) interacts with Mg(2+).

This sequence belongs to the class-II aminoacyl-tRNA synthetase family. Phe-tRNA synthetase alpha subunit type 1 subfamily. In terms of assembly, tetramer of two alpha and two beta subunits. The cofactor is Mg(2+).

Its subcellular location is the cytoplasm. The catalysed reaction is tRNA(Phe) + L-phenylalanine + ATP = L-phenylalanyl-tRNA(Phe) + AMP + diphosphate + H(+). The protein is Phenylalanine--tRNA ligase alpha subunit of Pseudomonas fluorescens (strain ATCC BAA-477 / NRRL B-23932 / Pf-5).